The primary structure comprises 189 residues: GTP cyclohydrolase 1 (189 aa).

Zn(2+) contacts are provided by Cys79, His82, and Cys150.

It belongs to the GTP cyclohydrolase I family. Homomer.

It carries out the reaction GTP + H2O = 7,8-dihydroneopterin 3'-triphosphate + formate + H(+). It functions in the pathway cofactor biosynthesis; 7,8-dihydroneopterin triphosphate biosynthesis; 7,8-dihydroneopterin triphosphate from GTP: step 1/1. This is GTP cyclohydrolase 1 from Rickettsia peacockii (strain Rustic).